The sequence spans 362 residues: Fructose-bisphosphate aldolase (362 aa).

Ser63 contacts D-glyceraldehyde 3-phosphate. Catalysis depends on Asp112, which acts as the Proton donor. Zn(2+) contacts are provided by His113, Asp147, Glu177, and His229. Position 230 (Gly230) interacts with dihydroxyacetone phosphate. His268 is a Zn(2+) binding site. Dihydroxyacetone phosphate-binding positions include 269 to 271 (GGS) and 290 to 293 (NVDT).

The protein belongs to the class II fructose-bisphosphate aldolase family. In terms of assembly, homodimer. Requires Zn(2+) as cofactor.

It catalyses the reaction beta-D-fructose 1,6-bisphosphate = D-glyceraldehyde 3-phosphate + dihydroxyacetone phosphate. It functions in the pathway carbohydrate degradation; glycolysis; D-glyceraldehyde 3-phosphate and glycerone phosphate from D-glucose: step 4/4. In terms of biological role, catalyzes the aldol condensation of dihydroxyacetone phosphate (DHAP or glycerone-phosphate) with glyceraldehyde 3-phosphate (G3P) to form fructose 1,6-bisphosphate (FBP) in gluconeogenesis and the reverse reaction in glycolysis. The polypeptide is Fructose-bisphosphate aldolase (fba) (Neurospora crassa (strain ATCC 24698 / 74-OR23-1A / CBS 708.71 / DSM 1257 / FGSC 987)).